The following is a 476-amino-acid chain: UDP-N-acetylmuramate--L-alanine ligase (476 aa).

Residue 125-131 (GTHGKTT) coordinates ATP.

It belongs to the MurCDEF family.

Its subcellular location is the cytoplasm. It carries out the reaction UDP-N-acetyl-alpha-D-muramate + L-alanine + ATP = UDP-N-acetyl-alpha-D-muramoyl-L-alanine + ADP + phosphate + H(+). Its pathway is cell wall biogenesis; peptidoglycan biosynthesis. Its function is as follows. Cell wall formation. The chain is UDP-N-acetylmuramate--L-alanine ligase from Actinobacillus succinogenes (strain ATCC 55618 / DSM 22257 / CCUG 43843 / 130Z).